Here is a 499-residue protein sequence, read N- to C-terminus: Maturase K (499 aa).

Belongs to the intron maturase 2 family. MatK subfamily.

It localises to the plastid. The protein resides in the chloroplast. In terms of biological role, usually encoded in the trnK tRNA gene intron. Probably assists in splicing its own and other chloroplast group II introns. This is Maturase K from Batis maritima (Maritime saltwort).